Reading from the N-terminus, the 1368-residue chain is DNA-directed RNA polymerase subunit beta (1368 aa).

The protein belongs to the RNA polymerase beta chain family. As to quaternary structure, the RNAP catalytic core consists of 2 alpha, 1 beta, 1 beta' and 1 omega subunit. When a sigma factor is associated with the core the holoenzyme is formed, which can initiate transcription.

It carries out the reaction RNA(n) + a ribonucleoside 5'-triphosphate = RNA(n+1) + diphosphate. DNA-dependent RNA polymerase catalyzes the transcription of DNA into RNA using the four ribonucleoside triphosphates as substrates. This is DNA-directed RNA polymerase subunit beta from Janthinobacterium sp. (strain Marseille) (Minibacterium massiliensis).